We begin with the raw amino-acid sequence, 297 residues long: 4-hydroxy-tetrahydrodipicolinate synthase (297 aa).

Thr-55 contacts pyruvate. Tyr-144 functions as the Proton donor/acceptor in the catalytic mechanism. The active-site Schiff-base intermediate with substrate is Lys-172. Ile-213 contacts pyruvate.

The protein belongs to the DapA family. Homotetramer; dimer of dimers.

The protein resides in the cytoplasm. The enzyme catalyses L-aspartate 4-semialdehyde + pyruvate = (2S,4S)-4-hydroxy-2,3,4,5-tetrahydrodipicolinate + H2O + H(+). It functions in the pathway amino-acid biosynthesis; L-lysine biosynthesis via DAP pathway; (S)-tetrahydrodipicolinate from L-aspartate: step 3/4. Its function is as follows. Catalyzes the condensation of (S)-aspartate-beta-semialdehyde [(S)-ASA] and pyruvate to 4-hydroxy-tetrahydrodipicolinate (HTPA). In Lactococcus lactis subsp. cremoris (strain MG1363), this protein is 4-hydroxy-tetrahydrodipicolinate synthase.